An 81-amino-acid polypeptide reads, in one-letter code: Costars family protein ABRACL (81 aa).

It belongs to the costars family.

This chain is Costars family protein ABRACL, found in Salmo salar (Atlantic salmon).